Here is a 501-residue protein sequence, read N- to C-terminus: Aerobic glycerol-3-phosphate dehydrogenase (501 aa).

An FAD-binding site is contributed by 5–33 (DLIVIGGGINGAGIAADAAGRGLSVLMLE).

Belongs to the FAD-dependent glycerol-3-phosphate dehydrogenase family. FAD is required as a cofactor.

It is found in the cytoplasm. The enzyme catalyses a quinone + sn-glycerol 3-phosphate = dihydroxyacetone phosphate + a quinol. It functions in the pathway polyol metabolism; glycerol degradation via glycerol kinase pathway; glycerone phosphate from sn-glycerol 3-phosphate (aerobic route): step 1/1. Its function is as follows. Conversion of glycerol 3-phosphate to dihydroxyacetone. Uses molecular oxygen or nitrate as electron acceptor. In Escherichia coli (strain K12), this protein is Aerobic glycerol-3-phosphate dehydrogenase (glpD).